The primary structure comprises 263 residues: Indolethylamine N-methyltransferase (263 aa).

The residue at position 13 (lysine 13) is an N6-succinyllysine. S-adenosyl-L-methionine-binding positions include tyrosine 20, tyrosine 25, 63-64 (GS), tyrosine 69, aspartate 85, and asparagine 90. Lysine 96 carries the N6-succinyllysine modification. S-adenosyl-L-methionine-binding positions include 142 to 143 (DA) and leucine 163.

Belongs to the class I-like SAM-binding methyltransferase superfamily. NNMT/PNMT/TEMT family. In terms of assembly, monomer. As to expression, highly expressed in lung, also detected in liver and at very low levels in brain.

It is found in the cytoplasm. The catalysed reaction is a tertiary amine + S-adenosyl-L-methionine = a methylated tertiary amine + S-adenosyl-L-homocysteine + H(+). The enzyme catalyses a secondary amine + S-adenosyl-L-methionine = a methylated secondary amine + S-adenosyl-L-homocysteine + H(+). It carries out the reaction a primary amine + S-adenosyl-L-methionine = a methylated primary amine + S-adenosyl-L-homocysteine + H(+). It catalyses the reaction dimethyl sulfide + S-adenosyl-L-methionine = trimethylsulfonium + S-adenosyl-L-homocysteine. Catalyzes the N-methylation of tryptamine and structurally related compounds. Functions as a thioether S-methyltransferase and is active with a variety of thioethers and the corresponding selenium and tellurium compounds, including 3-methylthiopropionaldehyde, dimethyl selenide, dimethyl telluride, 2-methylthioethylamine, 2-methylthioethanol, methyl-n-propyl sulfide and diethyl sulfide. Plays an important role in the detoxification of selenium compounds. This Oryctolagus cuniculus (Rabbit) protein is Indolethylamine N-methyltransferase (INMT).